A 445-amino-acid polypeptide reads, in one-letter code: Histone acetyltransferase ESA1 (445 aa).

Residue S17 is modified to Phosphoserine. One can recognise a Tudor-knot domain in the interval 22–74 (IIKCQCWVQKNDEERLAEILSINTRKAPPKFYVHYVNYNKRLDEWITTDRINL). The interval 88–114 (EDNKKQKKKKATNTSETPQDSLQDGVD) is disordered. Residues 99–109 (TNTSETPQDSL) show a composition bias toward polar residues. The region spanning 162-433 (ARVRNLNRII…IDPNRLIWKP (272 aa)) is the MYST-type HAT domain. A C2HC MYST-type; degenerate zinc finger spans residues 195 to 220 (IYIDDFTLQYFGSKKQYERYRKKCTL). Residues 245–266 (RTWCRNLCLLSKLFLDHKTLYY) carry the ESA1-RPD3 motif motif. At K262 the chain carries N6-acetyllysine; by autocatalysis. Residues 303–307 (ACILT) and 312–318 (QRMGYGK) contribute to the acetyl-CoA site. The active-site Proton donor/acceptor is the E338. S342 serves as a coordination point for acetyl-CoA.

The protein belongs to the MYST (SAS/MOZ) family. In terms of assembly, component of the NuA4 histone acetyltransferase complex composed of at least ACT1, ARP4, EAF3, EAF5, EAF6, EAF7, EPL1, ESA1, SWC4, TRA1, VID21, YAF9 and YNG2. The complex interacts with histones H4 (HHF1 and HHF2), H3 (HHT1 and HHT2) and H2A (HTA1 and HTA2). In terms of processing, autoacetylation at Lys-262 is required for proper function.

It catalyses the reaction L-lysyl-[histone] + acetyl-CoA = N(6)-acetyl-L-lysyl-[histone] + CoA + H(+). It carries out the reaction L-lysyl-[protein] + acetyl-CoA = N(6)-acetyl-L-lysyl-[protein] + CoA + H(+). The catalysed reaction is 2-hydroxyisobutanoyl-CoA + L-lysyl-[protein] = N(6)-(2-hydroxyisobutanoyl)-L-lysyl-[protein] + CoA + H(+). The enzyme catalyses (2E)-butenoyl-CoA + L-lysyl-[protein] = N(6)-(2E)-butenoyl-L-lysyl-[protein] + CoA + H(+). Its function is as follows. Catalytic component of the NuA4 histone acetyltransferase (HAT), a multiprotein complex involved in epigenetic transcriptional activation of selected genes principally by acetylation of nucleosomal histones H4, H3, H2B, H2A and H2A variant H2A.Z. Acetylates histone H4 to form H4K5ac, H4K8ac, H4K12ac and H4K16ac, histone H3 to form H3K14ac, histone H2B to form H2BK16ac, histone H2A to form H2AK4ac and H2AK7ac, and histone variant H2A.Z to form H2A.ZK14ac. Acetylation of histones gives a specific tag for epigenetic transcription initiation and elongation. Acetylation of histone H4 is essential for DNA double-strand break repair through homologous recombination. Involved in cell cycle progression. Recruitment to promoters depends on H3K4me. Also acetylates non-histone proteins, such as ATG3 and PAH1. Regulates autophagy by acetylating ATG3, controlling interaction the interaction between ATG3 and ATG8 and ATG8 lipidation. Acts as a regulator of fatty-acid-induced triacylglycerol synthesis by catalyzing acetylation of PAH1, thereby promoting the synthesis of diacylglycerol. In addition to protein acetyltransferase, can use different acyl-CoA substrates, such as 2-hydroxyisobutanoyl-CoA (2-hydroxyisobutyryl-CoA) or (2E)-butenoyl-CoA (crotonyl-CoA), and is able to mediate protein 2-hydroxyisobutyrylation and crotonylation, respectively. Catalyzes histone crotonylation. The chain is Histone acetyltransferase ESA1 from Saccharomyces cerevisiae (strain ATCC 204508 / S288c) (Baker's yeast).